The sequence spans 282 residues: Putative 4-diphosphocytidyl-2-C-methyl-D-erythritol kinase (282 aa).

Lysine 9 is a catalytic residue. 93 to 103 (PVSAGLAGGSA) provides a ligand contact to ATP. Aspartate 135 is a catalytic residue.

Belongs to the GHMP kinase family. IspE subfamily.

It carries out the reaction 4-CDP-2-C-methyl-D-erythritol + ATP = 4-CDP-2-C-methyl-D-erythritol 2-phosphate + ADP + H(+). Its function is as follows. Catalyzes the phosphorylation of the position 2 hydroxy group of 4-diphosphocytidyl-2C-methyl-D-erythritol. This chain is Putative 4-diphosphocytidyl-2-C-methyl-D-erythritol kinase, found in Staphylococcus aureus (strain MSSA476).